The following is a 298-amino-acid chain: GTP cyclohydrolase FolE2 (298 aa).

It belongs to the GTP cyclohydrolase IV family.

The enzyme catalyses GTP + H2O = 7,8-dihydroneopterin 3'-triphosphate + formate + H(+). It functions in the pathway cofactor biosynthesis; 7,8-dihydroneopterin triphosphate biosynthesis; 7,8-dihydroneopterin triphosphate from GTP: step 1/1. Converts GTP to 7,8-dihydroneopterin triphosphate. This chain is GTP cyclohydrolase FolE2, found in Neisseria meningitidis serogroup C (strain 053442).